The following is a 507-amino-acid chain: Mandelamide hydrolase (507 aa).

Residues Lys-100 and Ser-180 each act as charge relay system in the active site. The active-site Acyl-ester intermediate is the Ser-204.

In terms of assembly, monomer.

It catalyses the reaction (R)-mandelamide + H2O = (R)-mandelate + NH4(+). Its activity is regulated as follows. Inhibited by 3,4-dichloroisocoumarin and PMSF. Its function is as follows. Hydrolyzes both the R- and the S-enantiomers of mandelamide, and phenylacetamide. Has lower activity on 3-phenylpropionaide and lactamide. Does not hydrolyze benzamide. Hydrolyzes esters and amides with little steric bulk. Preferentially hydrolyzes aromatic substrates. The sequence is that of Mandelamide hydrolase from Pseudomonas putida (Arthrobacter siderocapsulatus).